Consider the following 466-residue polypeptide: Probable Xaa-Pro aminopeptidase pepP (466 aa).

Positions 264, 275, 398, and 438 each coordinate Mn(2+).

Belongs to the peptidase M24B family. It depends on Mn(2+) as a cofactor.

It carries out the reaction Release of any N-terminal amino acid, including proline, that is linked to proline, even from a dipeptide or tripeptide.. Its function is as follows. Catalyzes the removal of a penultimate prolyl residue from the N-termini of peptides. The protein is Probable Xaa-Pro aminopeptidase pepP (pepP) of Aspergillus terreus (strain NIH 2624 / FGSC A1156).